The chain runs to 529 residues: BAR/IMD domain-containing adapter protein 2-like 2 (529 aa).

The IMD domain occupies 1–239; it reads MAPEMDQFYR…HSPGLLGPAL (239 aa). Disordered regions lie at residues 221–327 and 403–510; these read EASR…GGAR and TSMS…TNPF. Residues Ser-231, Ser-272, and Ser-302 each carry the phosphoserine modification. Over residues 299-313 the composition is skewed to low complexity; the sequence is SASSLYSGSAQSSRS. One can recognise an SH3 domain in the interval 324-387; that stretch reads GGARRVRALV…PEAYVKALEE (64 aa). Low complexity-rich tracts occupy residues 403 to 413 and 452 to 462; these read TSMSPMTPMNP and RSRTPSRVPSR. Residues 463 to 472 are compositionally biased toward pro residues; the sequence is APSPAPPPLP. Ser-478 and Ser-481 each carry phosphoserine.

As to expression, expressed in the epithelial layer of the intestine (at protein level).

The protein localises to the cell membrane. It is found in the cell junction. It localises to the cytoplasmic vesicle membrane. Phosphoinositides-binding protein that induces the formation of planar or gently curved membrane structures. Binds to phosphoinositides, including to phosphatidylinositol 4,5-bisphosphate (PtdIns(4,5)P2) headgroups. There seems to be no clear preference for a specific phosphoinositide. The chain is BAR/IMD domain-containing adapter protein 2-like 2 (BAIAP2L2) from Homo sapiens (Human).